A 286-amino-acid polypeptide reads, in one-letter code: Shikimate dehydrogenase (NADP(+)) (286 aa).

Residues 20–22 and S67 each bind shikimate; that span reads SLS. K71 functions as the Proton acceptor in the catalytic mechanism. Residues N92 and D107 each contribute to the shikimate site. Residues 131 to 135 and A230 contribute to the NADP(+) site; that span reads GGGGA. Y232 serves as a coordination point for shikimate. Residue G253 coordinates NADP(+).

It belongs to the shikimate dehydrogenase family. In terms of assembly, homodimer.

The catalysed reaction is shikimate + NADP(+) = 3-dehydroshikimate + NADPH + H(+). The protein operates within metabolic intermediate biosynthesis; chorismate biosynthesis; chorismate from D-erythrose 4-phosphate and phosphoenolpyruvate: step 4/7. Its function is as follows. Involved in the biosynthesis of the chorismate, which leads to the biosynthesis of aromatic amino acids. Catalyzes the reversible NADPH linked reduction of 3-dehydroshikimate (DHSA) to yield shikimate (SA). In Lactococcus lactis subsp. cremoris (strain MG1363), this protein is Shikimate dehydrogenase (NADP(+)).